We begin with the raw amino-acid sequence, 208 residues long: dTTP/UTP pyrophosphatase (208 aa).

Positions 28-48 (DRIHPADIDETPQRAEHPRSL) are disordered. Aspartate 79 functions as the Proton acceptor in the catalytic mechanism.

This sequence belongs to the Maf family. YhdE subfamily. Requires a divalent metal cation as cofactor.

Its subcellular location is the cytoplasm. The catalysed reaction is dTTP + H2O = dTMP + diphosphate + H(+). It catalyses the reaction UTP + H2O = UMP + diphosphate + H(+). Its function is as follows. Nucleoside triphosphate pyrophosphatase that hydrolyzes dTTP and UTP. May have a dual role in cell division arrest and in preventing the incorporation of modified nucleotides into cellular nucleic acids. In Brucella abortus (strain 2308), this protein is dTTP/UTP pyrophosphatase.